The chain runs to 229 residues: UPF0758 protein Mbur_0382 (229 aa).

The MPN domain occupies 106–228 (KIRSANDVYS…YVSLKEEGYI (123 aa)). Zn(2+)-binding residues include His177, His179, and Asp190. Residues 177-190 (HNHPSGDPAPSRED) carry the JAMM motif motif.

The protein belongs to the UPF0758 family.

The protein is UPF0758 protein Mbur_0382 of Methanococcoides burtonii (strain DSM 6242 / NBRC 107633 / OCM 468 / ACE-M).